Here is a 364-residue protein sequence, read N- to C-terminus: Anthranilate phosphoribosyltransferase 1 (364 aa).

Residues Gly-102, 105 to 106 (GD), Thr-110, 112 to 115 (NIST), 130 to 138 (KHGNRSASS), and Ser-142 contribute to the 5-phospho-alpha-D-ribose 1-diphosphate site. Gly-102 lines the anthranilate pocket. Mg(2+) is bound at residue Ser-114. Asn-133 contacts anthranilate. Arg-188 is an anthranilate binding site. Mg(2+) is bound by residues Asp-247 and Glu-248.

The protein belongs to the anthranilate phosphoribosyltransferase family. As to quaternary structure, homodimer. The cofactor is Mg(2+).

The enzyme catalyses N-(5-phospho-beta-D-ribosyl)anthranilate + diphosphate = 5-phospho-alpha-D-ribose 1-diphosphate + anthranilate. The protein operates within amino-acid biosynthesis; L-tryptophan biosynthesis; L-tryptophan from chorismate: step 2/5. Functionally, catalyzes the transfer of the phosphoribosyl group of 5-phosphorylribose-1-pyrophosphate (PRPP) to anthranilate to yield N-(5'-phosphoribosyl)-anthranilate (PRA). This is Anthranilate phosphoribosyltransferase 1 from Nostoc sp. (strain PCC 7120 / SAG 25.82 / UTEX 2576).